The sequence spans 205 residues: GTP cyclohydrolase-2 (205 aa).

GTP is bound at residue 49–53; it reads RIHSE. Zn(2+) contacts are provided by Cys-54, Cys-65, and Cys-67. Residues Gln-70, 92 to 94, and Thr-114 each bind GTP; that span reads EGR. Catalysis depends on Asp-126, which acts as the Proton acceptor. Arg-128 functions as the Nucleophile in the catalytic mechanism. Residues Thr-149 and Lys-154 each contribute to the GTP site.

This sequence belongs to the GTP cyclohydrolase II family. The cofactor is Zn(2+).

The enzyme catalyses GTP + 4 H2O = 2,5-diamino-6-hydroxy-4-(5-phosphoribosylamino)-pyrimidine + formate + 2 phosphate + 3 H(+). Its pathway is cofactor biosynthesis; riboflavin biosynthesis; 5-amino-6-(D-ribitylamino)uracil from GTP: step 1/4. Functionally, catalyzes the conversion of GTP to 2,5-diamino-6-ribosylamino-4(3H)-pyrimidinone 5'-phosphate (DARP), formate and pyrophosphate. In Shewanella sediminis (strain HAW-EB3), this protein is GTP cyclohydrolase-2.